Consider the following 62-residue polypeptide: Large ribosomal subunit protein uL29 (62 aa).

Belongs to the universal ribosomal protein uL29 family.

The polypeptide is Large ribosomal subunit protein uL29 (Cytophaga hutchinsonii (strain ATCC 33406 / DSM 1761 / CIP 103989 / NBRC 15051 / NCIMB 9469 / D465)).